A 393-amino-acid chain; its full sequence is Putative mitogen-activated protein kinase kinase kinase 7-like (393 aa).

A Protein kinase domain is found at 11-266 (KLSEKFLGAG…PSMKEIEKFL (256 aa)). Residues 17-25 (LGAGSGGAV) and Lys-38 contribute to the ATP site. Asp-133 serves as the catalytic Proton acceptor. The tract at residues 339-379 (AAADGDREVRRAEKDTERETSRAAHNGERETRRAGQDVGRE) is disordered.

It belongs to the protein kinase superfamily. STE Ser/Thr protein kinase family. MAP kinase kinase kinase subfamily. It depends on Mg(2+) as a cofactor.

The catalysed reaction is L-seryl-[protein] + ATP = O-phospho-L-seryl-[protein] + ADP + H(+). The enzyme catalyses L-threonyl-[protein] + ATP = O-phospho-L-threonyl-[protein] + ADP + H(+). In Drosophila melanogaster (Fruit fly), this protein is Putative mitogen-activated protein kinase kinase kinase 7-like (Takl1).